The sequence spans 128 residues: Group 2 truncated hemoglobin GlbO (128 aa).

Positions 23 to 36 form a cross-link, isodityrosine (Tyr-Tyr); it reads YAQVAEDEVLRRVY. Tyr36 is subject to 3',4'-dihydroxyphenylalanine. His75 is a heme binding site.

It belongs to the truncated hemoglobin family. Group II subfamily. In terms of assembly, homododecamer. Heme serves as cofactor. Post-translationally, contains L-DOPA (3',4'-dihydroxyphenylalanine).

The protein is Group 2 truncated hemoglobin GlbO (glbO) of Mycobacterium bovis (strain ATCC BAA-935 / AF2122/97).